The following is a 1125-amino-acid chain: MSQSSSLKRKQQPTISSFFGKTTSSSGESTNKKASLNGLGRAKQRIREEESNLSPSPEDKGEYLDDEDEDIVPPSRKRVKSSRISTDGANAAAKGNDDDLSQSPHRNVPASSRTERFRFQSSPVSSLDAEGSQVEGREAIDTERERKRKENLHQKFVRRLGGPGCLPSLEHGSNANTAMTEGGEDEDEALDEEDVAPPPSTKARGARKAASTKLTPLEKQVIDIKNKHKDAILVVEVGYKFRFFGEDARIAAKELSIVCIPGKLRFDEHPSEAHLNRFASASIPVHRLHVHVKRLVRAGHKVGVVRQLETAALKAAGDNRNAPFERKLTHLYTKGTYIDDTEELEGLNAVGANSAAPATGYLLCMTESNAKGWGNDEKVQVGILAVQPATGNIIHDSFEDGFMRTEIETRLLHIAPCEFLLIGDVSRATDKLVQHLSGSKMNVFGDKVRVERVSKSKTAAAESHSHVSSFYAGRMKATSTTQDERARDLLDKVLNLPEDVTICLSAMIKHLKEYNLENVFDLTKYFQPFSARSHMLLNGNTLINLEIYQNQTEQTSKGSLFWTLDRTKTRFGQRLLRKWVGRPLLDKQELEDRVAAVTELKDSDATPRVGRLKTLLSKVKTDLEKNLLRIYYGKCTRPELLTVLQTLQLIATEFSHVKSPADAGFDSPVINEAISQLPVVLDDVVSYLNKINLHSAKADDKFSFFQESEETDEITEQKLGIGSVEHDLEEYRNTAAEILCKKKVCYVTNAGIEYLIEVENSSLQMKKIPASWRKISGTKKVSRFHPPEVVNLMRERDQHKEALAAACDKAFLGLLADISTKYQPFRDCIQALATLDCFMSLAAVAAQPGYVRPTYADEARISVRGGRHPMVEQLLLDTYVPNDTELGTDGTRALLVTGPNMGGKSSYVRQVALISIMGQIGSYVPAESATLGMLDAVYTRMGAFDNMLAGESTFMVELSETSDILKQATPRSLVILDELGRGTSTHDGVAIAQAVLDYMVRDIRSLTLFITHYQHLSNLARTFPNGELRNVHMKFTESGKDGQDITFLYEVGEGVAHRSYGLNVARLANIPSSVLDVAYTKSAELEEKIKRKNLEGIAKGLSRVLENGENEGELMERLLSEVEQL.

Residues 1–212 form a disordered region; sequence MSQSSSLKRK…ARGARKAAST (212 aa). Low complexity predominate over residues 16–33; it reads SSFFGKTTSSSGESTNKK. Positions 101 to 112 are enriched in polar residues; the sequence is SQSPHRNVPASS. Residues 135-145 show a composition bias toward basic and acidic residues; sequence EGREAIDTERE. Residues 146–158 show a composition bias toward basic residues; sequence RKRKENLHQKFVR. Residues 182–195 show a composition bias toward acidic residues; that stretch reads GGEDEDEALDEEDV. The mispair-binding domain stretch occupies residues 208–335; it reads KAASTKLTPL…RKLTHLYTKG (128 aa). 898-905 is a binding site for ATP; sequence GPNMGGKS.

This sequence belongs to the DNA mismatch repair MutS family. MSH3 subfamily. As to quaternary structure, heterodimer consisting of MSH2-MSH3 (MutS beta). Forms a ternary complex with MutL alpha (MLH1-PMS1).

It is found in the nucleus. Functionally, component of the post-replicative DNA mismatch repair system (MMR). Heterodimerizes with MSH2 to form MutS beta, which binds to DNA mismatches thereby initiating DNA repair. MSH3 provides substrate-binding and substrate specificity to the complex. When bound, the MutS beta heterodimer bends the DNA helix and shields approximately 20 base pairs. Acts mainly to repair insertion-deletion loops (IDLs) from 2 to 13 nucleotides in size, but can also repair base-base and single insertion-deletion mismatches that occur during replication. After mismatch binding, forms a ternary complex with the MutL alpha heterodimer, which is thought to be responsible for directing the downstream MMR events, including strand discrimination, excision, and resynthesis. ATP binding and hydrolysis play a pivotal role in mismatch repair functions. In Coccidioides immitis (strain RS) (Valley fever fungus), this protein is DNA mismatch repair protein MSH3 (MSH3).